The chain runs to 88 residues: uncharacterized protein (88 aa).

The segment at 1–54 is disordered; sequence AVDAYDDDDNLKNEEGDYYNESDDGYSGDEEEEEKQEEDEQDDDDLQFDDGVPE. Residues 16–53 are compositionally biased toward acidic residues; it reads GDYYNESDDGYSGDEEEEEKQEEDEQDDDDLQFDDGVP.

In terms of tissue distribution, predominantly in developing fruit.

This is an uncharacterized protein from Fragaria ananassa (Strawberry).